The chain runs to 386 residues: ADP,ATP carrier protein, mitochondrial (386 aa).

The N-terminal 77 residues, 1–77 (MADMNQHPTV…SNASPVFVQA (77 aa)), are a transit peptide targeting the mitochondrion. Solcar repeat units lie at residues 84–177 (AAFA…FKRL), 189–281 (KWFA…LKPV), and 289–375 (DSFF…LQVL). The next 5 membrane-spanning stretches (helical) occupy residues 86–113 (FATDFLMGGVSAAVSKTAAAPIERVKLL), 154–178 (TANVIRYFPTQALNFAFKDYFKRLF), 187–207 (YWKWFAGNLASGGAAGASSLF), 257–278 (FNISCVGIIVYRGLYFGMYDSL), and 292–312 (FASFGLGWLITNGAGLASYPI). ADP contacts are provided by arginine 159 and lysine 171. Arginine 316 contributes to the ADP binding site. Residues 316-321 (RRRMMM) form an important for transport activity region. The Nucleotide carrier signature motif signature appears at 316 to 321 (RRRMMM). Residues 352 to 372 (AGANILRAVAGAGVLAGYDKL) traverse the membrane as a helical segment.

The protein belongs to the mitochondrial carrier (TC 2.A.29) family. Monomer.

It is found in the mitochondrion inner membrane. It catalyses the reaction ADP(in) + ATP(out) = ADP(out) + ATP(in). With respect to regulation, the matrix-open state (m-state) is inhibited by the membrane-permeable bongkrekic acid (BKA). The cytoplasmic-open state (c-state) is inhibited by the membrane-impermeable toxic inhibitor carboxyatractyloside (CATR). Functionally, ADP:ATP antiporter that mediates import of ADP into the mitochondrial matrix for ATP synthesis, and export of ATP out to fuel the cell. Cycles between the cytoplasmic-open state (c-state) and the matrix-open state (m-state): operates by the alternating access mechanism with a single substrate-binding site intermittently exposed to either the cytosolic (c-state) or matrix (m-state) side of the inner mitochondrial membrane. In Solanum tuberosum (Potato), this protein is ADP,ATP carrier protein, mitochondrial (ANT).